We begin with the raw amino-acid sequence, 1403 residues long: Centrosomal protein of 162 kDa (1403 aa).

A disordered region spans residues 20–46; it reads LSDDSFENSNKTPRQPNEDNKEMKKKD. A compositionally biased stretch (basic and acidic residues) spans 35–46; sequence PNEDNKEMKKKD. 2 positions are modified to phosphoserine: S160 and S163. Disordered regions lie at residues 169–243, 256–292, 306–348, and 453–606; these read LHRY…MLAN, VGLS…SSGD, SLGD…ESDL, and NPSL…GGNR. Over residues 178-208 the composition is skewed to acidic residues; the sequence is PAEDGCENESEQEELPETYSDDFEDAEDADD. Basic and acidic residues predominate over residues 210–238; sequence LITKDEETHPKENSESGKDSFPKQEEEKT. The span at 485-500 shows a compositional bias: basic residues; the sequence is PCKKARSTPSLPKRKP. Basic and acidic residues-rich tracts occupy residues 526-536 and 571-585; these read LEKKTSKDNTK and PHRE…RPED. Residues 614 to 1124 are a coiled coil; sequence KRAQDAEEKW…QKERRMMLSR (511 aa). The disordered stretch occupies residues 1126–1147; that stretch reads IPRSREETAAKRLKKDPNRGHG. Residues 1128 to 1144 show a composition bias toward basic and acidic residues; it reads RSREETAAKRLKKDPNR. Residues 1174-1386 adopt a coiled-coil conformation; the sequence is EENYRLRSEL…LDVLRELHRQ (213 aa).

This sequence belongs to the CEP162 family. Interacts with CPNE4. Interacts with alpha-tubulin. Interacts with CEP290.

Its subcellular location is the cytoplasm. It is found in the cytoskeleton. The protein resides in the microtubule organizing center. The protein localises to the centrosome. It localises to the centriole. Its subcellular location is the spindle. It is found in the nucleus. Required to promote assembly of the transition zone in primary cilia. Acts by specifically recognizing and binding the axonemal microtubule. Localizes to the distal ends of centrioles before ciliogenesis and directly binds to axonemal microtubule, thereby promoting and restricting transition zone formation specifically at the cilia base. Required to mediate CEP290 association with microtubules. The protein is Centrosomal protein of 162 kDa (Cep162) of Mus musculus (Mouse).